Consider the following 284-residue polypeptide: Elongation factor Ts (284 aa).

Residues 80 to 83 (TDFV) form an involved in Mg(2+) ion dislocation from EF-Tu region.

Belongs to the EF-Ts family.

It is found in the cytoplasm. In terms of biological role, associates with the EF-Tu.GDP complex and induces the exchange of GDP to GTP. It remains bound to the aminoacyl-tRNA.EF-Tu.GTP complex up to the GTP hydrolysis stage on the ribosome. The polypeptide is Elongation factor Ts (Neisseria meningitidis serogroup C (strain 053442)).